The sequence spans 96 residues: Uteroglobin (96 aa).

Positions 1-19 are cleaved as a signal peptide; it reads MKIAITITVLMLSICCSSA.

This sequence belongs to the secretoglobin family. In terms of assembly, antiparallel homodimer; disulfide-linked. Interaction with LMBR1L is controversial. In terms of tissue distribution, club cells (nonciliated cells of the surface epithelium of the pulmonary airways).

It is found in the secreted. Functionally, binds phosphatidylcholine, phosphatidylinositol, polychlorinated biphenyls (PCB) and weakly progesterone, potent inhibitor of phospholipase A2. This Rattus norvegicus (Rat) protein is Uteroglobin (Scgb1a1).